Consider the following 466-residue polypeptide: MIPAASFAGKQVSLFGLGGSGIATARALIEGGAQVLAWDDNPDSVAKAAATGIATADLRGADWAKFSAFVLSPGVPLTHPKPHWTVELAKGAGVEVIGDIELFCRERILQAPTAPFIAITGTNGKSTTTALTAHILKSAGRDTQMGGNIGRAVMTLDPPKPDRHFVVECSSYQIDLAPSINPTAGILLNLTPDHLDRHGTMQHYASIKERLVAGSETAIIGIDDSWCAQIAERLERAGQQVIRISKRLPLTDGYFADGTNLMEAVHGRYSKVAFLEGIGSLRGQHNAQNALAAVAACLKVGLDLGEIQSGLESFPGLAHRMEQVGRKDHVLFVNDSKATNADAAAPALSSFPRIYWIAGGLPKEGGIEPLRGFFPRIAKAYLIGEAAPAFSATLGEAVPYEISGTLAAAVAHAAHDAAKDDSGEVVVLLSPACASFDQFKNFEVRGEAFRQAASAIDGVKPIGGAR.

Residue 121–127 coordinates ATP; it reads GTNGKST.

The protein belongs to the MurCDEF family.

It localises to the cytoplasm. It carries out the reaction UDP-N-acetyl-alpha-D-muramoyl-L-alanine + D-glutamate + ATP = UDP-N-acetyl-alpha-D-muramoyl-L-alanyl-D-glutamate + ADP + phosphate + H(+). The protein operates within cell wall biogenesis; peptidoglycan biosynthesis. In terms of biological role, cell wall formation. Catalyzes the addition of glutamate to the nucleotide precursor UDP-N-acetylmuramoyl-L-alanine (UMA). This Mesorhizobium japonicum (strain LMG 29417 / CECT 9101 / MAFF 303099) (Mesorhizobium loti (strain MAFF 303099)) protein is UDP-N-acetylmuramoylalanine--D-glutamate ligase.